A 718-amino-acid polypeptide reads, in one-letter code: Polyribonucleotide nucleotidyltransferase (718 aa).

Residues Asp506 and Asp512 each contribute to the Mg(2+) site. The 61-residue stretch at 572–632 (PKLELFSVDP…EQIKAAKDYI (61 aa)) folds into the KH domain. Residues 657–718 (GQEFQGIVKK…NGKISVDLCE (62 aa)) form the S1 motif domain.

The protein belongs to the polyribonucleotide nucleotidyltransferase family. The cofactor is Mg(2+).

It localises to the cytoplasm. The enzyme catalyses RNA(n+1) + phosphate = RNA(n) + a ribonucleoside 5'-diphosphate. Functionally, involved in mRNA degradation. Catalyzes the phosphorolysis of single-stranded polyribonucleotides processively in the 3'- to 5'-direction. The chain is Polyribonucleotide nucleotidyltransferase from Campylobacter jejuni subsp. doylei (strain ATCC BAA-1458 / RM4099 / 269.97).